We begin with the raw amino-acid sequence, 134 residues long: Biopolymer transport protein exbD2 (134 aa).

Over 1-17 the chain is Cytoplasmic; that stretch reads MRLGRRTSKQEEAQIDL. The chain crosses the membrane as a helical span at residues 18-38; it reads TSMLDIVFIMLIFFIVTSSFV. The Periplasmic portion of the chain corresponds to 39 to 134; that stretch reads RESGVEVNRP…KSIALAAEKP (96 aa).

This sequence belongs to the ExbD/TolR family. The accessory proteins ExbB and ExbD seem to form a complex with TonB.

The protein localises to the cell inner membrane. Involved in the TonB-dependent energy-dependent transport of various receptor-bound substrates. The sequence is that of Biopolymer transport protein exbD2 (exbD2) from Vibrio cholerae serotype O1 (strain ATCC 39315 / El Tor Inaba N16961).